The sequence spans 1147 residues: SR-related and CTD-associated factor 4 (1147 aa).

Residues 1-139 form the CID domain; that stretch reads MDAVNAFNQE…PLLDMAAGTS (139 aa). Residue lysine 49 is modified to N6-acetyllysine. 4 disordered regions span residues 145–179, 235–254, 269–331, and 424–502; these read AENV…AVPQ, KTTP…PEQK, DEPE…QQPA, and VKRH…KPET. Serine 154 carries the phosphoserine modification. Composition is skewed to low complexity over residues 283-292 and 299-310; these read TAVTTTAPAA and TATVPAAAAPAA. A compositionally biased stretch (basic and acidic residues) spans 424–433; sequence VKRHMSDNRK. The span at 434–475 shows a compositional bias: basic residues; that stretch reads SRSRSASRSPKRRRSRSGSRSRRSRHRRSRSRSRDRRRHSPR. Residues 477–492 show a composition bias toward basic and acidic residues; it reads RSQERRDREKERERRQ. An RRM domain is found at 508-582; the sequence is TTLWVGQLDK…KSIKIAWALN (75 aa). Disordered regions lie at residues 629–661 and 879–1147; these read DWKG…IPKP and RPMP…EAPR. Phosphoserine is present on serine 656. Positions 879-913 are enriched in pro residues; that stretch reads RPMPPHMMHRGPPPGPGGFAMPPPHGMKGPFPPHG. The segment covering 941 to 965 has biased composition (low complexity); it reads QQPPQQPQQQPQPQAPQQPQQQQQQ. A compositionally biased stretch (pro residues) spans 966-977; it reads QPPPSQQPPPTQ. A Phosphoserine modification is found at serine 1004. Residues 1009 to 1085 show a composition bias toward basic and acidic residues; the sequence is VENDRERYGN…RGKEKPEVTD (77 aa).

In terms of assembly, interacts with POLR2A; via C-terminal heptapeptide repeat domain (CTD) phosphorylated at 'Ser-2' and 'Ser-5'.

Its subcellular location is the nucleus. Its function is as follows. Anti-terminator protein required to prevent early mRNA termination during transcription. Together with SCAF8, acts by suppressing the use of early, alternative poly(A) sites, thereby preventing the accumulation of non-functional truncated proteins. Mechanistically, associates with the phosphorylated C-terminal heptapeptide repeat domain (CTD) of the largest RNA polymerase II subunit (POLR2A), and subsequently binds nascent RNA upstream of early polyadenylation sites to prevent premature mRNA transcript cleavage and polyadenylation. Independently of SCAF8, also acts as a suppressor of transcriptional readthrough. The protein is SR-related and CTD-associated factor 4 of Homo sapiens (Human).